We begin with the raw amino-acid sequence, 174 residues long: RNA pyrophosphohydrolase (174 aa).

Residues glycine 6–lysine 149 enclose the Nudix hydrolase domain. A Nudix box motif is present at residues glycine 38 to glycine 59.

The protein belongs to the Nudix hydrolase family. RppH subfamily. A divalent metal cation serves as cofactor.

Functionally, accelerates the degradation of transcripts by removing pyrophosphate from the 5'-end of triphosphorylated RNA, leading to a more labile monophosphorylated state that can stimulate subsequent ribonuclease cleavage. The polypeptide is RNA pyrophosphohydrolase (Neisseria meningitidis serogroup C / serotype 2a (strain ATCC 700532 / DSM 15464 / FAM18)).